A 445-amino-acid polypeptide reads, in one-letter code: Phosphoglucosamine mutase (445 aa).

Ser102 (phosphoserine intermediate) is an active-site residue. Residues Ser102, Asp241, Asp243, and Asp245 each contribute to the Mg(2+) site. Ser102 is modified (phosphoserine).

It belongs to the phosphohexose mutase family. It depends on Mg(2+) as a cofactor. Activated by phosphorylation.

It carries out the reaction alpha-D-glucosamine 1-phosphate = D-glucosamine 6-phosphate. Catalyzes the conversion of glucosamine-6-phosphate to glucosamine-1-phosphate. This chain is Phosphoglucosamine mutase, found in Shewanella denitrificans (strain OS217 / ATCC BAA-1090 / DSM 15013).